Consider the following 387-residue polypeptide: Dynactin subunit 2 (387 aa).

Coiled coils occupy residues 99–125, 256–282, and 355–387; these read LQRC…DTGR, SQLD…SNAT, and TGVQ…QMIK.

Belongs to the dynactin subunit 2 family. As to quaternary structure, subunit of dynactin, a multiprotein complex associated with dynein.

The protein resides in the cytoplasm. The protein localises to the cytoskeleton. It localises to the membrane. Modulates cytoplasmic dynein binding to an organelle, and plays a role in prometaphase chromosome alignment and spindle organization during mitosis. The sequence is that of Dynactin subunit 2 from Anopheles gambiae (African malaria mosquito).